Consider the following 206-residue polypeptide: LexA repressor (206 aa).

Positions 28-48 form a DNA-binding region, H-T-H motif; sequence RAEIARELGFRSANAAEEHLK. Active-site for autocatalytic cleavage activity residues include serine 123 and lysine 160.

This sequence belongs to the peptidase S24 family. As to quaternary structure, homodimer.

The enzyme catalyses Hydrolysis of Ala-|-Gly bond in repressor LexA.. Represses a number of genes involved in the response to DNA damage (SOS response), including recA and lexA. In the presence of single-stranded DNA, RecA interacts with LexA causing an autocatalytic cleavage which disrupts the DNA-binding part of LexA, leading to derepression of the SOS regulon and eventually DNA repair. The protein is LexA repressor of Vibrio atlanticus (strain LGP32) (Vibrio splendidus (strain Mel32)).